Reading from the N-terminus, the 71-residue chain is DNA-directed RNA polymerase subunit omega (71 aa).

This sequence belongs to the RNA polymerase subunit omega family. In terms of assembly, the RNAP catalytic core consists of 2 alpha, 1 beta, 1 beta' and 1 omega subunit. When a sigma factor is associated with the core the holoenzyme is formed, which can initiate transcription.

It carries out the reaction RNA(n) + a ribonucleoside 5'-triphosphate = RNA(n+1) + diphosphate. In terms of biological role, promotes RNA polymerase assembly. Latches the N- and C-terminal regions of the beta' subunit thereby facilitating its interaction with the beta and alpha subunits. This chain is DNA-directed RNA polymerase subunit omega, found in Alkaliphilus oremlandii (strain OhILAs) (Clostridium oremlandii (strain OhILAs)).